The following is a 119-amino-acid chain: Large ribosomal subunit protein uL22 (119 aa).

This sequence belongs to the universal ribosomal protein uL22 family. As to quaternary structure, part of the 50S ribosomal subunit.

Functionally, this protein binds specifically to 23S rRNA; its binding is stimulated by other ribosomal proteins, e.g. L4, L17, and L20. It is important during the early stages of 50S assembly. It makes multiple contacts with different domains of the 23S rRNA in the assembled 50S subunit and ribosome. Its function is as follows. The globular domain of the protein is located near the polypeptide exit tunnel on the outside of the subunit, while an extended beta-hairpin is found that lines the wall of the exit tunnel in the center of the 70S ribosome. The protein is Large ribosomal subunit protein uL22 of Chlorobium phaeobacteroides (strain DSM 266 / SMG 266 / 2430).